Reading from the N-terminus, the 49-residue chain is Large ribosomal subunit protein bL36 (49 aa).

Belongs to the bacterial ribosomal protein bL36 family.

The polypeptide is Large ribosomal subunit protein bL36 (Delftia acidovorans (strain DSM 14801 / SPH-1)).